The sequence spans 355 residues: Peptide chain release factor 1 (355 aa).

An N5-methylglutamine modification is found at glutamine 231. A disordered region spans residues 283–303 (NAQNKEARKTQVGSGDRSERI).

It belongs to the prokaryotic/mitochondrial release factor family. Post-translationally, methylated by PrmC. Methylation increases the termination efficiency of RF1.

It is found in the cytoplasm. Its function is as follows. Peptide chain release factor 1 directs the termination of translation in response to the peptide chain termination codons UAG and UAA. This Helicobacter hepaticus (strain ATCC 51449 / 3B1) protein is Peptide chain release factor 1.